The following is a 268-amino-acid chain: Imidazole glycerol phosphate synthase subunit HisF (268 aa).

Residues Asp-12 and Asp-131 contribute to the active site.

It belongs to the HisA/HisF family. As to quaternary structure, heterodimer of HisH and HisF.

The protein resides in the cytoplasm. It catalyses the reaction 5-[(5-phospho-1-deoxy-D-ribulos-1-ylimino)methylamino]-1-(5-phospho-beta-D-ribosyl)imidazole-4-carboxamide + L-glutamine = D-erythro-1-(imidazol-4-yl)glycerol 3-phosphate + 5-amino-1-(5-phospho-beta-D-ribosyl)imidazole-4-carboxamide + L-glutamate + H(+). The protein operates within amino-acid biosynthesis; L-histidine biosynthesis; L-histidine from 5-phospho-alpha-D-ribose 1-diphosphate: step 5/9. IGPS catalyzes the conversion of PRFAR and glutamine to IGP, AICAR and glutamate. The HisF subunit catalyzes the cyclization activity that produces IGP and AICAR from PRFAR using the ammonia provided by the HisH subunit. In Chelativorans sp. (strain BNC1), this protein is Imidazole glycerol phosphate synthase subunit HisF.